Reading from the N-terminus, the 796-residue chain is Inactive dipeptidyl peptidase 10 (796 aa).

Residues 1-34 are Cytoplasmic-facing; the sequence is MNQTASVSHHIKCQPSKTIKELGSNSPPQRNWKG. The segment at 1 to 56 is mediates effects on KCND2; that stretch reads MNQTASVSHHIKCQPSKTIKELGSNSPPQRNWKGIAIALLVILVVCSLITMSVILL. Residues 35 to 55 form a helical; Signal-anchor for type II membrane protein membrane-spanning segment; that stretch reads IAIALLVILVVCSLITMSVIL. At 56–796 the chain is on the extracellular side; the sequence is LTPDELTNSS…VLPQEPEEDE (741 aa). N-linked (GlcNAc...) asparagine glycans are attached at residues N90, N111, and N119. Phosphotyrosine occurs at positions 138 and 143. N-linked (GlcNAc...) asparagine glycosylation is found at N257, N342, and N748.

It belongs to the peptidase S9B family. DPPIV subfamily. In terms of assembly, may form oligomers. Interacts with KCND1. Interacts with KCND2. Post-translationally, N-glycosylation is important for cell surface expression, specially at Asn-257, which is crucial. As to expression, found in serum, T-cells and brain (at protein level). Expressed in brain, pancreas, spinal cord and adrenal glands.

It is found in the cell membrane. Its function is as follows. Promotes cell surface expression of the potassium channel KCND2. Modulates the activity and gating characteristics of the potassium channel KCND2. Has no dipeptidyl aminopeptidase activity. The protein is Inactive dipeptidyl peptidase 10 (DPP10) of Homo sapiens (Human).